Reading from the N-terminus, the 290-residue chain is UPF0761 membrane protein YihY (290 aa).

6 consecutive transmembrane segments (helical) span residues 44 to 64, 104 to 124, 140 to 160, 183 to 203, 210 to 230, and 244 to 264; these read LLSL…FPMF, VGAC…DSAL, FAVY…SLAI, IFPL…VPTI, AIVG…GFAL, and VLAV…IVLL.

The protein belongs to the UPF0761 family.

The protein resides in the cell inner membrane. This chain is UPF0761 membrane protein YihY, found in Escherichia coli O7:K1 (strain IAI39 / ExPEC).